Consider the following 312-residue polypeptide: Signal peptidase I (312 aa).

The helical transmembrane segment at 7–27 (IFLLTSTFFTGILWIIDHILL) threads the bilayer. Residues 28–63 (IKNYFYNKKKTKNNNTILINKVILENKKCFFRSLSS) lie on the Cytoplasmic side of the membrane. Residues 64–84 (LFPTFFIVFIIRSFIYEPFQI) traverse the membrane as a helical segment. At 85–312 (PSGSMMPTLL…IRIKRIGNIY (228 aa)) the chain is on the extracellular side. Catalysis depends on residues Ser88 and Lys142.

This sequence belongs to the peptidase S26 family.

It localises to the cell membrane. The enzyme catalyses Cleavage of hydrophobic, N-terminal signal or leader sequences from secreted and periplasmic proteins.. The protein is Signal peptidase I (lepB) of Buchnera aphidicola subsp. Schizaphis graminum (strain Sg).